The sequence spans 288 residues: MAAKIIDGKTIAQQVRSEVAQKVQARIAAGLRAPGLAVVLVGSNPASQIYVASKRKACEEVGFVSRSYDLPETTSEAELLELIDALNADNTIDGILVQLPLPAGIDNVKVLERIHPDKDVDGFHPYNVGRLCQRAPRLRPCTPRGIVTLLERYNIDTFGLNAVVIGASNIVGRPMSMELLLAGCTTTVTHRFTKNLRHHVENADLLIVAVGKPGFIPGDWIKEGAIVIDVGINRLENGKVVGDVVFEDAAKRASYITPVPGGVGPMTVATLIENTLQACVEYHDPQGE.

NADP(+)-binding positions include 166-168 and I232; that span reads GAS.

Belongs to the tetrahydrofolate dehydrogenase/cyclohydrolase family. In terms of assembly, homodimer.

The enzyme catalyses (6R)-5,10-methylene-5,6,7,8-tetrahydrofolate + NADP(+) = (6R)-5,10-methenyltetrahydrofolate + NADPH. The catalysed reaction is (6R)-5,10-methenyltetrahydrofolate + H2O = (6R)-10-formyltetrahydrofolate + H(+). It participates in one-carbon metabolism; tetrahydrofolate interconversion. Catalyzes the oxidation of 5,10-methylenetetrahydrofolate to 5,10-methenyltetrahydrofolate and then the hydrolysis of 5,10-methenyltetrahydrofolate to 10-formyltetrahydrofolate. In Escherichia coli (strain UTI89 / UPEC), this protein is Bifunctional protein FolD.